The primary structure comprises 252 residues: Imidazole glycerol phosphate synthase subunit HisF (252 aa).

Residues D11 and D130 contribute to the active site.

Belongs to the HisA/HisF family. Heterodimer of HisH and HisF.

The protein resides in the cytoplasm. It carries out the reaction 5-[(5-phospho-1-deoxy-D-ribulos-1-ylimino)methylamino]-1-(5-phospho-beta-D-ribosyl)imidazole-4-carboxamide + L-glutamine = D-erythro-1-(imidazol-4-yl)glycerol 3-phosphate + 5-amino-1-(5-phospho-beta-D-ribosyl)imidazole-4-carboxamide + L-glutamate + H(+). It participates in amino-acid biosynthesis; L-histidine biosynthesis; L-histidine from 5-phospho-alpha-D-ribose 1-diphosphate: step 5/9. Functionally, IGPS catalyzes the conversion of PRFAR and glutamine to IGP, AICAR and glutamate. The HisF subunit catalyzes the cyclization activity that produces IGP and AICAR from PRFAR using the ammonia provided by the HisH subunit. This chain is Imidazole glycerol phosphate synthase subunit HisF, found in Polynucleobacter necessarius subsp. necessarius (strain STIR1).